The following is a 216-amino-acid chain: Transmembrane emp24 domain-containing protein eca (216 aa).

The N-terminal stretch at 1-20 (MRDQFISLALILCVLHSACG) is a signal peptide. At 21 to 182 (LYFHISETER…FRHTSESTNS (162 aa)) the chain is on the lumenal side. Positions 30-126 (RKCFIEEVPD…QLRVHLDIQV (97 aa)) constitute a GOLD domain. A coiled-coil region spans residues 134–164 (ANVAQKEKLTELQLRIRQLLDQVEQITKEQN). A helical membrane pass occupies residues 183–203 (RVLWWSLAQTVVLVCMGFWQM). Residues 204-216 (RHLKSFFEAKKLV) are Cytoplasmic-facing. Positions 213–216 (KKLV) match the Prevents secretion from ER motif.

Belongs to the EMP24/GP25L family.

It is found in the endoplasmic reticulum membrane. Its function is as follows. Eca and bai are essential, though not redundant, for dorsoventral patterning of the embryo. Specifically required during early embryogenesis for the activity of maternal tkv, while the zygotic tkv is not affected. Involved in Golgi organization. In Drosophila simulans (Fruit fly), this protein is Transmembrane emp24 domain-containing protein eca.